A 79-amino-acid polypeptide reads, in one-letter code: Sec-independent protein translocase protein TatA (79 aa).

Residues 1-21 traverse the membrane as a helical segment; the sequence is MGGWSSPSHWLIILLIVVLLF. Over residues 49–61 the composition is skewed to basic and acidic residues; sequence EVAKNTQKIEENK. Residues 49–79 form a disordered region; that stretch reads EVAKNTQKIEENKNTTNNTNADASIDETKKA.

Belongs to the TatA/E family. As to quaternary structure, the Tat system comprises two distinct complexes: a TatABC complex, containing multiple copies of TatA, TatB and TatC subunits, and a separate TatA complex, containing only TatA subunits. Substrates initially bind to the TatABC complex, which probably triggers association of the separate TatA complex to form the active translocon.

Its subcellular location is the cell inner membrane. Part of the twin-arginine translocation (Tat) system that transports large folded proteins containing a characteristic twin-arginine motif in their signal peptide across membranes. TatA could form the protein-conducting channel of the Tat system. In Campylobacter jejuni subsp. doylei (strain ATCC BAA-1458 / RM4099 / 269.97), this protein is Sec-independent protein translocase protein TatA.